Consider the following 954-residue polypeptide: Bifunctional endo-1,4-beta-xylanase XylA (954 aa).

Residues 1–27 constitute a signal peptide (or 28, or 29); sequence MKLSKIKKVLSGTVSALMIASAAPVVA. One can recognise a GH11 domain in the interval 29–236; it reads AADQQTRGNV…SNGSANVKSV (208 aa). Residue Glu122 is the Nucleophile of the active site. Glu223 (proton donor) is an active-site residue. A compositionally biased stretch (polar residues) spans 233 to 243; sequence VKSVSVTQGGS. Positions 233–628 are disordered; it reads VKSVSVTQGG…NNNNSAGSSD (396 aa). Positions 246 to 622 are enriched in low complexity; the sequence is NGGQQQNNDW…WNQGQQNNNN (377 aa). The 329-residue stretch at 624 to 952 folds into the GH10 domain; sequence AGSSDSLKGA…KPAYDRVMAL (329 aa). Glu774 serves as the catalytic Proton donor. Glu884 functions as the Nucleophile in the catalytic mechanism.

The protein in the N-terminal section; belongs to the glycosyl hydrolase 11 (cellulase G) family. In the C-terminal section; belongs to the glycosyl hydrolase 10 (cellulase F) family.

The enzyme catalyses Endohydrolysis of (1-&gt;4)-beta-D-xylosidic linkages in xylans.. It participates in glycan degradation; xylan degradation. Its function is as follows. Xylanase domain releases more xylo-oligosaccharides and GH10 domain more xylose. This Ruminococcus flavefaciens protein is Bifunctional endo-1,4-beta-xylanase XylA (xynA).